The chain runs to 264 residues: Short chain dehydrogenase/reductase AacuN (264 aa).

NADP(+) contacts are provided by Ile24, Asp70, Asn97, and Arg130. Active-site proton donor residues include Ser146, Ser147, and Tyr161. 3 residues coordinate NADP(+): Tyr161, Lys165, and Thr196. Lys165 functions as the Lowers pKa of active site Tyr in the catalytic mechanism.

The protein belongs to the short-chain dehydrogenases/reductases (SDR) family.

It carries out the reaction 3,8,9,10-tetrahydroxy-6-methyl-1,4-dihydroanthracen-1-one + NADPH + H(+) = (3R)-3,8,9,10-tetrahydroxy-6-methyl-1,2,3,4-tetrahydroanthracen-1-one + NADP(+). Its pathway is secondary metabolite biosynthesis. Its function is as follows. Atrochrysone carboxylic acid synthase; part of the gene cluster that mediates the biosynthesis of the tetrahydroxanthone dimer secalonic acid D. The pathway begins with the synthesis of atrochrysone thioester by the polyketide synthase AacuL. The atrochrysone carboxyl ACP thioesterase AacuM then breaks the thioester bond and releases the atrochrysone carboxylic acid from AacuL. Atrochrysone carboxylic acid is decarboxylated by the decarboxylase AacuI, and oxidized by the anthrone oxygenase AacuG to yield emodin. Emodin is then reduced to emodin hydroquinone by a yet unidentified oxidoreductase. A-ring reduction by the short chain dehydrogenase AacuN, dehydration by the scytalone dehydratase-like protein AacuK and probable spontaneous re-oxidation, results in overall deoxygenation to chrysophanol. Baeyer-Villiger oxidation by the Baeyer-Villiger monooxygenase (BVMO) AacuH then yields monodictyphenone. Monodictyphenone is transformed into compounds with the tetrahydroxanthone skeleton via methylesterification by the methyltransferase AacuQ, followed by the action of the flavin-dependent monooxygenase AacuC, the isomerase AacuP, and the short chain dehydrogenase/reductase AacuF or AacuD. AacuF and AacuD should accept the same compound as a substrate but perform the ketoreduction with a different stereoselectivity, thus yielding blennolides B and A, respectively. In the final step of the biosynthesis, the cytochrome P450 monooxygenase AacuE accepts blennolide B and/or blennolide A to conduct the dimerization reaction to furnish the tetrahydroxanthone dimers, secalonic acids D, B, and F. The chain is Short chain dehydrogenase/reductase AacuN from Aspergillus aculeatus (strain ATCC 16872 / CBS 172.66 / WB 5094).